We begin with the raw amino-acid sequence, 299 residues long: MRAERRKQLFRLLGDLPDRRPISVETLRIEEREENIVETLLLDLNGHEKAPAYFVKPKKTEGPCPAVLFQHSHGGQYDRGKSELIEGADYLKTPSFSDELTSLGYGVLAIDHWGFGDRRGKAESEIFKEMLLTGKVMWGMMIYDSLSALDYMQSRSDVQPDRIGTIGMSMGGLMAWWTAALDDRIKVCVDLCSQVDHHVLIKTQNLDRHGFYYYVPSLAKHFSASEIQSLIAPRPHLSLVGVHDRLTPAEGVDKIEKELTAVYAGQGAADCYRVVRSASGHFETAVIRHEAVRFLQKWL.

Belongs to the dienelactone hydrolase family.

This chain is Putative hydrolase YtaP (ytaP), found in Bacillus subtilis (strain 168).